Consider the following 104-residue polypeptide: UPF0145 protein STH1265 (104 aa).

This sequence belongs to the UPF0145 family.

In Symbiobacterium thermophilum (strain DSM 24528 / JCM 14929 / IAM 14863 / T), this protein is UPF0145 protein STH1265.